The primary structure comprises 433 residues: MAALSDRQKDELHRAMLAYLHAAGMHNAYAALQHDAALADVDPRDRAVGLLEKKWTSVIRLQKKVIDLENRNAALLAELAAAARPAAPGPFLPRPPPRHTLASHRAPVTRLAFHPTWTLLASASEDATVKLWDWEAGDMERTLKGHTKAVMDVDFDPRGGLMATCSSDLTLKLWDTANQYTNVKTLHGHDHSVSSVRFMPDGETLVSASRDKTIRVWQVSSGYCIKTFSGHAEWVREAVPSEDGRWLVSASNDQTSRIWDFSTGETKMELRGHEHVVECAVFAPVNAYPAIRELAGLKPPAPRDTRAKSPGVYAATGSRDKTIKLWDALSGQCLRTLVGHDNWIRALVFHPSGKYLLSASDDKTIKVWDLANGRCTKTIEAHSHFVTSMTWGRAVGASGGIEKVNGDASSKEPRRINVLATGSVDQTIKVWTP.

Residues Gln8 to Asp40 form the LisH domain. Positions Ser57–Arg84 form a coiled coil. 7 WD repeats span residues Ser103 to Lys144, His146 to Lys184, Gly188 to Thr227, Gly230 to Glu269, Gly272 to Thr336, Gly339 to Thr378, and Ala381 to Lys429.

This sequence belongs to the WD repeat LIS1/nudF family. Self-associates. Interacts with NDL1 and dynein.

The protein resides in the cytoplasm. It localises to the cytoskeleton. Its subcellular location is the spindle pole. Functionally, positively regulates the activity of the minus-end directed microtubule motor protein dynein. Plays a central role in positioning the mitotic spindle at the bud neck during cell division. Targets cytoplasmic dynein to microtubule plus ends, thereby promoting dynein-mediated microtubule sliding along the bud cortex and consequently the movement of the mitotic spindle to the bud neck. The polypeptide is Nuclear distribution protein PAC1 (Cryptococcus neoformans var. neoformans serotype D (strain B-3501A) (Filobasidiella neoformans)).